The primary structure comprises 98 residues: Endoribonuclease antitoxin GhoS (98 aa).

As to quaternary structure, monomer. Post-translationally, unlike other TA antitoxins, this protein is stable.

In terms of biological role, antitoxin component of a type V toxin-antitoxin (TA) system. Neutralizes the toxic effects of toxin GhoT by digesting ghoT transcripts in a sequence-specific manner. In concert with GhoT is involved in reducing cell growth during antibacterial stress. In Escherichia coli O157:H7, this protein is Endoribonuclease antitoxin GhoS.